The primary structure comprises 502 residues: N-sulphoglucosamine sulphohydrolase (502 aa).

The first 20 residues, 1 to 20, serve as a signal peptide directing secretion; it reads MSCPVPACCALLLVLGLCRA. Positions 31 and 32 each coordinate Ca(2+). N41 carries an N-linked (GlcNAc...) asparagine glycan. C70 serves as a coordination point for Ca(2+). C70 acts as the Nucleophile in catalysis. Residue C70 is modified to 3-oxoalanine (Cys). N-linked (GlcNAc...) asparagine glycans are attached at residues N142 and N151. C183 and C194 are disulfide-bonded. N-linked (GlcNAc...) asparagine glycosylation occurs at N264. The Ca(2+) site is built by D273 and N274. The N-linked (GlcNAc...) asparagine glycan is linked to N413. Cysteines 481 and 495 form a disulfide.

The protein belongs to the sulfatase family. Requires Ca(2+) as cofactor. The conversion to 3-oxoalanine (also known as C-formylglycine, FGly), of a serine or cysteine residue in prokaryotes and of a cysteine residue in eukaryotes, is critical for catalytic activity.

Its subcellular location is the lysosome. It carries out the reaction N-sulfo-D-glucosamine + H2O = D-glucosamine + sulfate. Its function is as follows. Catalyzes a step in lysosomal heparan sulfate degradation. The protein is N-sulphoglucosamine sulphohydrolase (SGSH) of Homo sapiens (Human).